A 131-amino-acid polypeptide reads, in one-letter code: Holo-[acyl-carrier-protein] synthase (131 aa).

The Mg(2+) site is built by Asp8 and Glu59.

The protein belongs to the P-Pant transferase superfamily. AcpS family. Requires Mg(2+) as cofactor.

It is found in the cytoplasm. The enzyme catalyses apo-[ACP] + CoA = holo-[ACP] + adenosine 3',5'-bisphosphate + H(+). In terms of biological role, transfers the 4'-phosphopantetheine moiety from coenzyme A to a Ser of acyl-carrier-protein. The sequence is that of Holo-[acyl-carrier-protein] synthase from Orientia tsutsugamushi (strain Ikeda) (Rickettsia tsutsugamushi).